The primary structure comprises 107 residues: MDLNNRLTEDEALEQAYDIFLELAADNLDPADILLFNLQFEERGGAELFDPAEDWAEHVDFDLNPDFFAEVVIGLAENEGDEITDIFARVLICREKDHKLCHILWKE.

It belongs to the putative dsDNA mimic protein family.

Functionally, may act as a double-stranded DNA (dsDNA) mimic. Probably regulates the activity of a dsDNA-binding protein. This is Putative double-stranded DNA mimic protein PC1_1990 from Pectobacterium carotovorum subsp. carotovorum (strain PC1).